Consider the following 1132-residue polypeptide: Error-prone DNA polymerase (1132 aa).

The protein belongs to the DNA polymerase type-C family. DnaE2 subfamily.

The protein resides in the cytoplasm. It carries out the reaction DNA(n) + a 2'-deoxyribonucleoside 5'-triphosphate = DNA(n+1) + diphosphate. In terms of biological role, DNA polymerase involved in damage-induced mutagenesis and translesion synthesis (TLS). It is not the major replicative DNA polymerase. The sequence is that of Error-prone DNA polymerase from Anaeromyxobacter dehalogenans (strain 2CP-C).